The chain runs to 188 residues: MISTNDFKTGQTIKFNNNLFQIVSFLHVKPGKGAAFVRCKLKNLRTGSIIDNTFNSGIKVELAFINKNKIQFLYIDGNKYIFINIANYEQIEIEKQKIKNKIKYLYEGIIVDVVIYNDYEILDINLPEKLNLTVTKTEFIEKKDVKTNYYKDATLETGLVIKVPLFIQQGEKIIVNTQTGLYVSRCNK.

The protein belongs to the elongation factor P family.

It is found in the cytoplasm. It functions in the pathway protein biosynthesis; polypeptide chain elongation. Its function is as follows. Involved in peptide bond synthesis. Stimulates efficient translation and peptide-bond synthesis on native or reconstituted 70S ribosomes in vitro. Probably functions indirectly by altering the affinity of the ribosome for aminoacyl-tRNA, thus increasing their reactivity as acceptors for peptidyl transferase. This chain is Elongation factor P, found in Phytoplasma mali (strain AT).